A 515-amino-acid chain; its full sequence is MNQPAIKHALNVKRADDFAQWYQAVIAEAELAEESGVRGCMVIKPWGYGIWERIQKLMDAEIKEAGVENCYFPLFIPLSYFTKEAEHVEGFAKEMAVVTHHRLISDGKGGLTPDPEAKLEEPLVVRPTSETVIGAAMSRWIQSWRDLPLLTNQWANVVRWEMRTRMFLRTSEFLWQEGHTAHVDEADAMKETLRALEMYRAFAEGPLAMPVIAGPKPENERFPGAVETFSIEAMMQDGKALQAGTSHYLGTTFAKAAGIQYQNKEGQQALAHTTSWGVSTRLIGGVIMTHGDDDGLRVPPQVAPQQIVILPMLRDNEGDDALLAYCEEIRASLVKLSVFGERIRVLLDKRPGKATQKRWAWVKKGMPLILEIGGRDAEGGLVSVLRRDRLWRQDAKPNFVGQAKDDFLASAATELESIQAALYDEARARRDAQIVRDVTDLEGLKGYFAEGNKYPGWVEMGWAKPTGEALDKVVEQLKALKLTIRNTPMDAEKPVGACPFTGEPAVEKILIARSY.

It belongs to the class-II aminoacyl-tRNA synthetase family. ProS type 3 subfamily. In terms of assembly, homodimer.

It localises to the cytoplasm. It catalyses the reaction tRNA(Pro) + L-proline + ATP = L-prolyl-tRNA(Pro) + AMP + diphosphate. Catalyzes the attachment of proline to tRNA(Pro) in a two-step reaction: proline is first activated by ATP to form Pro-AMP and then transferred to the acceptor end of tRNA(Pro). In Novosphingobium aromaticivorans (strain ATCC 700278 / DSM 12444 / CCUG 56034 / CIP 105152 / NBRC 16084 / F199), this protein is Proline--tRNA ligase.